We begin with the raw amino-acid sequence, 312 residues long: Olfactory receptor 51A7 (312 aa).

Topologically, residues 1-25 are extracellular; the sequence is MSVLNNSEVKLFLLIGIPGLEHAHI. Residue Asn-5 is glycosylated (N-linked (GlcNAc...) asparagine). A helical transmembrane segment spans residues 26–46; that stretch reads WFSIPICLMYLLAIMGNCTIL. The Cytoplasmic segment spans residues 47–54; it reads FIIKTEPS. The chain crosses the membrane as a helical span at residues 55–75; sequence LHEPMYYFLAMLAVSDMGLSL. The Extracellular segment spans residues 76-99; the sequence is SSLPTMLRVFLFNAMGISPNACFA. Cys-97 and Cys-189 form a disulfide bridge. The chain crosses the membrane as a helical span at residues 100-120; the sequence is QEFFIHGFTVMESSVLLIMSL. The Cytoplasmic portion of the chain corresponds to 121–139; it reads DRFLAIHNPLRYSSILTSN. A helical transmembrane segment spans residues 140–160; it reads RVAKMGLILAIRSILLVIPFP. At 161–196 the chain is on the extracellular side; the sequence is FTLRRLKYCQKNLLSHSYCLHQDTMKLACSDNKTNV. N-linked (GlcNAc...) asparagine glycosylation is present at Asn-192. Residues 197 to 216 form a helical membrane-spanning segment; it reads IYGFFIALCTMLDLALIVLS. Over 217–236 the chain is Cytoplasmic; sequence YVLILKTILSIASLAERLKA. Residues 237-257 traverse the membrane as a helical segment; the sequence is LNTCVSHICAVLTFYVPIITL. Residues 258–272 are Extracellular-facing; that stretch reads AAMHHFAKHKSPLVV. A helical membrane pass occupies residues 273-293; it reads ILIADMFLLVPPLMNPIVYCV. The Cytoplasmic portion of the chain corresponds to 294–312; sequence KTRQIWEKILGKLLNVCGR.

This sequence belongs to the G-protein coupled receptor 1 family.

It is found in the cell membrane. Odorant receptor. The sequence is that of Olfactory receptor 51A7 (OR51A7) from Homo sapiens (Human).